Reading from the N-terminus, the 518-residue chain is MTLAEFWPLCLRRLHDMLPQGQFAQWIAPLTVGEEGGVWVVYGKNQFACNMLKSQFAGKIEAVREELAAGRSAFVFKPGEGVRYEMAAVEGAVEPAEPSLHAGSEEMPVQEVLLDELPSEEPVKPAASKTAADILAERMKNLPHEPRHTAEPASRPESEVLAKARTDAQRDAEEARYEQTNLSPDYTFDTLVEGKGNRLAAAAAQAIAESPGQSYNPFFLYGSTGLGKTHLVQAVGNELLKNRPDAKVRYMHSDDYIRSFMKAVRNNTYDVFKQQYKQYDLLIIDDIQFIKGKDRTMEEFFYLYNHFHNEKKQLILTCDVLPAKIEGMDDRLKSRFSWGLTLELEPPELEMRIAILQKKAEAAGISIEDEAALFIANLIRSNVRELEGAFNRVGASSRFMNRPVIDIDLARTALQDIIAEKHKVITADIIIDAVAKYYRIKISDVLGKKRTRNIARPRQVAMSLTKELTTLSLPSIGDSFGGRDHTTVMHGIRAVAKLREEDPELAQDYEKLLILIQN.

The tract at residues 1–72 is domain I, interacts with DnaA modulators; sequence MTLAEFWPLC…VREELAAGRS (72 aa). The domain II stretch occupies residues 72 to 180; sequence SAFVFKPGEG…DAEEARYEQT (109 aa). Residues 181-397 are domain III, AAA+ region; that stretch reads NLSPDYTFDT…GAFNRVGASS (217 aa). 4 residues coordinate ATP: Gly225, Gly227, Lys228, and Thr229. The domain IV, binds dsDNA stretch occupies residues 398–518; sequence RFMNRPVIDI…YEKLLILIQN (121 aa).

The protein belongs to the DnaA family. As to quaternary structure, oligomerizes as a right-handed, spiral filament on DNA at oriC.

It is found in the cytoplasm. Plays an essential role in the initiation and regulation of chromosomal replication. ATP-DnaA binds to the origin of replication (oriC) to initiate formation of the DNA replication initiation complex once per cell cycle. Binds the DnaA box (a 9 base pair repeat at the origin) and separates the double-stranded (ds)DNA. Forms a right-handed helical filament on oriC DNA; dsDNA binds to the exterior of the filament while single-stranded (ss)DNA is stabiized in the filament's interior. The ATP-DnaA-oriC complex binds and stabilizes one strand of the AT-rich DNA unwinding element (DUE), permitting loading of DNA polymerase. After initiation quickly degrades to an ADP-DnaA complex that is not apt for DNA replication. Binds acidic phospholipids. The protein is Chromosomal replication initiator protein DnaA of Neisseria meningitidis serogroup C / serotype 2a (strain ATCC 700532 / DSM 15464 / FAM18).